The sequence spans 568 residues: MSSLYTKLVKGATKIKMAPPKQKYVDPILSGTSSARGLQEITHALDIRLSDTAWTIVYKALIVLHLMIQQGEKDVTLRHYSHNLDVFQLRKISHTTKWSSNDMRALQRYDEYLKTRCEEYGRLGMDHLRDNYSSLKLGSKNQLSMDEELDHVESLEIQINALIRNKYSVSDLENHLLLYAFQLLVQDLLGLYNALNEGVITLLESFFELSIEHAKRTLDLYKDFVDMTEYVVRYLKIGKAVGLKIPVIKHITTKLINSLEEHLREETKRQRGEPSEPQQDRKPSTAISSTSSHNNNSNDKNKSIAQKKLEQIREQKRLLEQQLQNQQLLISPTVPQDAYNPFGSQQQDLNNDTFSFEPTQPQMTAQVPQPTANPFLIPQQQQQALQLTSASTMPQPSEIQITPNLNNQQTGMYASNLQYTPNFTGSGFGGYTTTENNAIMTGTLDPTKTGSNNPFSLENIAREQQQQNFQNSPNPFTLQQAQTTPILAHSQTGNPFQAQNVVTSPMGTYMTNPVAGQLQYASTGAQQQPQMMQGQQTGYVMVPTAFVPINQQQQQQQHQQENPNLIDI.

Positions 1-127 (MSSLYTKLVK…EEYGRLGMDH (127 aa)) constitute an ENTH domain. Residues 262–283 (HLREETKRQRGEPSEPQQDRKP) show a composition bias toward basic and acidic residues. Residues 262-302 (HLREETKRQRGEPSEPQQDRKPSTAISSTSSHNNNSNDKNK) form a disordered region. A Glycyl lysine isopeptide (Lys-Gly) (interchain with G-Cter in ubiquitin) cross-link involves residue Lys-282. The span at 284-298 (STAISSTSSHNNNSN) shows a compositional bias: low complexity. Phosphothreonine is present on Thr-449.

Belongs to the AP180 family. As to quaternary structure, interacts with PAN1 and the clathrin heavy and light chains CHC1 and CLC1.

The protein resides in the bud. The protein localises to the bud neck. It is found in the cell membrane. It localises to the cytoplasm. Involved in endocytosis and clathrin cage assembly. The protein is Clathrin coat assembly protein AP180B (YAP1802) of Saccharomyces cerevisiae (strain ATCC 204508 / S288c) (Baker's yeast).